The primary structure comprises 158 residues: Endoribonuclease YbeY (158 aa).

Zn(2+) contacts are provided by histidine 124, histidine 128, and histidine 134.

The protein belongs to the endoribonuclease YbeY family. Zn(2+) serves as cofactor.

It localises to the cytoplasm. Its function is as follows. Single strand-specific metallo-endoribonuclease involved in late-stage 70S ribosome quality control and in maturation of the 3' terminus of the 16S rRNA. The chain is Endoribonuclease YbeY from Latilactobacillus sakei subsp. sakei (strain 23K) (Lactobacillus sakei subsp. sakei).